A 208-amino-acid chain; its full sequence is Outer-membrane lipoprotein LolB (208 aa).

Positions Met-1 to Ala-21 are cleaved as a signal peptide. The N-palmitoyl cysteine moiety is linked to residue Cys-22. Cys-22 carries the S-diacylglycerol cysteine lipid modification.

Belongs to the LolB family. As to quaternary structure, monomer.

Its subcellular location is the cell outer membrane. In terms of biological role, plays a critical role in the incorporation of lipoproteins in the outer membrane after they are released by the LolA protein. The chain is Outer-membrane lipoprotein LolB from Erwinia tasmaniensis (strain DSM 17950 / CFBP 7177 / CIP 109463 / NCPPB 4357 / Et1/99).